Reading from the N-terminus, the 401-residue chain is Chalcone synthase 4 (401 aa).

The active site involves C168.

Belongs to the thiolase-like superfamily. Chalcone/stilbene synthases family.

It catalyses the reaction (E)-4-coumaroyl-CoA + 3 malonyl-CoA + 3 H(+) = 2',4,4',6'-tetrahydroxychalcone + 3 CO2 + 4 CoA. The protein operates within secondary metabolite biosynthesis; flavonoid biosynthesis. Its function is as follows. The primary product of this enzyme is 4,2',4',6'-tetrahydroxychalcone (also termed naringenin-chalcone or chalcone) which can under specific conditions spontaneously isomerize into naringenin. The polypeptide is Chalcone synthase 4 (CHS4) (Sorghum bicolor (Sorghum)).